A 37-amino-acid polypeptide reads, in one-letter code: Large ribosomal subunit protein bL36 (37 aa).

Belongs to the bacterial ribosomal protein bL36 family.

The chain is Large ribosomal subunit protein bL36 from Hydrogenobaculum sp. (strain Y04AAS1).